We begin with the raw amino-acid sequence, 153 residues long: UPF0756 membrane protein Lm4b_01579 (153 aa).

The next 4 helical transmembrane spans lie at 6–26 (MLFL…SLII), 54–74 (WGVT…QIGF), 80–100 (SFKS…SILA), and 117–137 (LVFG…GPVI).

This sequence belongs to the UPF0756 family.

The protein resides in the cell membrane. This chain is UPF0756 membrane protein Lm4b_01579, found in Listeria monocytogenes serotype 4b (strain CLIP80459).